The following is a 452-amino-acid chain: MQRRIFGIETEFGVTCTFHGQRRLSPDEVARYLFRRVVSWGRSSNVFLSNGSRLYLDVGSHPEYATAECDDLAQLVTHDKAGERILEDLLIDAERRLAEEGIGGDIFLFKNNTDSAGNSYGCHENYLVTRAGEFSRVADVLLPFLVTRQLVCGAGKVLQTPRGGVYCLSQRAEHIWEGVSSATTRSRPIINTRDEPHADAERYRRLHVIVGDSNMAEPTTLLKVGSVHLVLQMIEEGVQFRDFTLDNPIRAIREISHDLTGRRQVRLAGGREASALEIQREYYARAVQHVESGDPSPTTQYLIDLWGRALDAVEQQDFSSIDTEIDWAIKHRLVERYRSKHNLTLSDPRVAQLDLAYHDIRRGRGVFDLLQRKGMVRRITDDGEIELAKDSPPQTTRAKLRGDFIAAAQEAGRDFTVDWVHLKLNDQAQRTVLCKDPFRSVDERVERLINSL.

Glutamate 9 is a Mg(2+) binding site. Arginine 53 lines the ATP pocket. Tyrosine 55 is a binding site for Mg(2+). Residue aspartate 57 is the Proton acceptor of the active site. A Mg(2+)-binding site is contributed by glutamate 63. ATP-binding residues include threonine 66 and tryptophan 419.

The protein belongs to the Pup ligase/Pup deamidase family. Pup-conjugating enzyme subfamily.

The catalysed reaction is ATP + [prokaryotic ubiquitin-like protein]-L-glutamate + [protein]-L-lysine = ADP + phosphate + N(6)-([prokaryotic ubiquitin-like protein]-gamma-L-glutamyl)-[protein]-L-lysine.. Its pathway is protein degradation; proteasomal Pup-dependent pathway. The protein operates within protein modification; protein pupylation. Catalyzes the covalent attachment of the prokaryotic ubiquitin-like protein modifier Pup to the proteasomal substrate proteins, thereby targeting them for proteasomal degradation. This tagging system is termed pupylation. The ligation reaction involves the side-chain carboxylate of the C-terminal glutamate of Pup and the side-chain amino group of a substrate lysine. This chain is Pup--protein ligase, found in Saccharomonospora viridis (strain ATCC 15386 / DSM 43017 / JCM 3036 / CCUG 5913 / NBRC 12207 / NCIMB 9602 / P101) (Thermoactinomyces viridis).